Consider the following 187-residue polypeptide: Ribosome-recycling factor (187 aa).

This sequence belongs to the RRF family.

It localises to the cytoplasm. Responsible for the release of ribosomes from messenger RNA at the termination of protein biosynthesis. May increase the efficiency of translation by recycling ribosomes from one round of translation to another. This Rhodopseudomonas palustris (strain BisB5) protein is Ribosome-recycling factor.